Here is a 480-residue protein sequence, read N- to C-terminus: Carboxy-terminal processing protease CtpB (480 aa).

The N-terminal stretch at 1–23 (MNQKIMAVIAAGSMLFGGAGVYA) is a signal peptide. Residues 92 to 182 (SVYMDKQTAK…SSVSMKIQRP (91 aa)) form the PDZ domain. Positions 113–116 (GIGA) are peptide binding. Ser-309 acts as the Nucleophile in catalysis. Residues Lys-334 and Gln-338 each act as charge relay system in the active site.

The protein belongs to the peptidase S41A family. As to quaternary structure, homodimer. In terms of processing, is cleaved by SpoIVB in vitro and in vivo but this cleavage does not appear to be necessary for CtpB activation. CtpB can also cleave itself in vivo.

It localises to the forespore intermembrane space. The enzyme catalyses The enzyme shows specific recognition of a C-terminal tripeptide, Xaa-Yaa-Zaa, in which Xaa is preferably Ala or Leu, Yaa is preferably Ala or Tyr, and Zaa is preferably Ala, but then cleaves at a variable distance from the C-terminus. A typical cleavage is -Ala-Ala-|-Arg-Ala-Ala-Lys-Glu-Asn-Tyr-Ala-Leu-Ala-Ala.. Activated by peptide binding to the PDZ domain. Its function is as follows. Involved in the signal transduction pathway leading to the proteolytic activation of the mother cell transcription factor pro-sigma-K during sporulation. The signaling serine protease CtpB triggers pro-sigma-K processing by cleaving the pre-processed regulatory protein SpoIVFA and is necessary for the proper timing of sigma-K activation. The chain is Carboxy-terminal processing protease CtpB (ctpB) from Bacillus subtilis (strain 168).